Consider the following 149-residue polypeptide: ER export of PMA1 protein 1 (149 aa).

Residues 1 to 6 are Lumenal-facing; the sequence is MNLYGY. The helical; Signal-anchor for type II membrane protein transmembrane segment at 7-27 threads the bilayer; it reads FLLLIIVIAFIALLPLFSGIG. Topologically, residues 28–149 are cytoplasmic; it reads TFKLTKPKSS…KKNEAYEGFV (122 aa).

In terms of assembly, interacts with PMA1 and PSG1.

Its subcellular location is the endoplasmic reticulum membrane. The protein resides in the cytoplasmic vesicle. The protein localises to the COPI-coated vesicle membrane. It is found in the COPII-coated vesicle membrane. It localises to the golgi apparatus membrane. Functionally, specific cargo receptor protein for the plasma membrane ATPase PMA1 that acts with PSG1 to promote the transport and maturation of PMA1. EXP1 and PSG1 probably act sequentially to promote PMA1 sorting between the ER and the Golgi, with EXP1 promoting PMA1 export from the ER to the Golgi while PSG1 has a role in PMA1 maturation or quality control in the Golgi. This is ER export of PMA1 protein 1 from Saccharomyces cerevisiae (strain ATCC 204508 / S288c) (Baker's yeast).